Reading from the N-terminus, the 788-residue chain is Protein TRS1 (788 aa).

Disordered stretches follow at residues 1-82 (MAQR…NFWH) and 610-663 (IHKK…PSRV). Residues 16–25 (RGRGAGGPSG) show a composition bias toward gly residues. The span at 26–56 (VGSSPPSSCVPMGATSTAGTGASAAPTATPG) shows a compositional bias: low complexity. The RNA-binding stretch occupies residues 74-248 (SGNNSNFWHG…HGAGEVVRLY (175 aa)). Residues 651–660 (LRRDDEDWKP) show a composition bias toward basic and acidic residues. The interaction with host EIF2AK2/PKR stretch occupies residues 672 to 788 (LDETFWVLGS…NVATHYHYNA (117 aa)).

The protein belongs to the herpesviridae US22 family. Interacts with host EIF2AK2/PKR; this interaction retains EIF2AK2 to the host nucleus and prevents its activation. Interaction (via N-terminus) with host BECN1; this interaction inhibits host autophagy. Interacts with the viral DNA polymerase accessory subunit UL44. Interacts with host HSPA5.

Its subcellular location is the virion. The protein localises to the host cytoplasm. The protein resides in the host nucleus. In terms of biological role, inhibits the establishment of the antiviral state in the infected cell. Prevents the phosphorylation of the host eukaryotic translation initiation factor eIF-2alpha/EIF2S1 and thus the shutoff of viral and cellular protein synthesis by directly interacting with EIF2AK2/PKR. Prevents stress granule formation in response to eIF-2alpha/EIF2S1 phosphorylation, thereby rescuing viral replication and protein synthesis. Also inhibits host autophagy by interacting with host Beclin-1/BECN1. This Human cytomegalovirus (strain Merlin) (HHV-5) protein is Protein TRS1 (TRS1).